The sequence spans 1214 residues: Zinc finger E-box-binding homeobox 2 (1214 aa).

The interval 1-101 (MKQPIMADGP…GVEHPWHNNE (101 aa)) is disordered. The segment covering 12–24 (CKRRKQANPRRKN) has biased composition (basic residues). Polar residues predominate over residues 57 to 74 (DQETSPASVPNHESSPHV). Positions 89–98 (REGGVEHPWH) are enriched in basic and acidic residues. A Phosphoserine modification is found at Ser-142. 3 consecutive C2H2-type zinc fingers follow at residues 211–234 (LTCP…KYRH), 241–263 (FSCP…MVTH), and 282–304 (FKCT…LRIH). Residues 310–334 (YECPNCKKRFSHSGSYSSHISSKKC) form a C2H2-type 4; atypical zinc finger. Residues Ser-356, Ser-360, and Ser-364 each carry the phosphoserine modification. An N6-acetyllysine modification is found at Lys-377. Lys-391 participates in a covalent cross-link: Glycyl lysine isopeptide (Lys-Gly) (interchain with G-Cter in SUMO); alternate. Lys-391 is covalently cross-linked (Glycyl lysine isopeptide (Lys-Gly) (interchain with G-Cter in SUMO2); alternate). An SMAD-MH2 binding domain region spans residues 437-487 (QHLGVGMEAPLLGFPTMNSNLSEVQKVLQIVDNTVSRQKMDCKAEEISKLK). Residues Lys-479 and Lys-555 each participate in a glycyl lysine isopeptide (Lys-Gly) (interchain with G-Cter in SUMO2) cross-link. The C2H2-type 5; atypical zinc-finger motif lies at 581-605 (FSCQFCKESFPGPIPLHQHERYLCK). Residues Lys-611 and Lys-632 each participate in a glycyl lysine isopeptide (Lys-Gly) (interchain with G-Cter in SUMO2) cross-link. A DNA-binding region (homeobox; atypical) is located at residues 644-703 (GMTSPINPYKDHMSVLKAYYAMNMEPNSDELLKISIAVGLPQEFVKEWFEQRKVYQYSNS). Ser-647 carries the phosphoserine modification. The segment covering 702–715 (NSRSPSLERSSKPL) has biased composition (low complexity). 3 disordered regions span residues 702 to 740 (NSRS…DSIT), 771 to 810 (PVEK…SSEE), and 832 to 857 (ATKN…ENSD). A Glycyl lysine isopeptide (Lys-Gly) (interchain with G-Cter in SUMO2) cross-link involves residue Lys-713. A phosphoserine mark is found at Ser-731 and Ser-780. Composition is skewed to low complexity over residues 780–808 (SNTP…SFSS) and 840–854 (SSIS…SSSE). Thr-782 carries the phosphothreonine modification. Phosphoserine is present on Ser-784. A Glycyl lysine isopeptide (Lys-Gly) (interchain with G-Cter in SUMO); alternate cross-link involves residue Lys-866. A Glycyl lysine isopeptide (Lys-Gly) (interchain with G-Cter in SUMO2); alternate cross-link involves residue Lys-866. 2 consecutive C2H2-type zinc fingers follow at residues 999 to 1021 (YACD…KYEH) and 1027 to 1049 (HQCQ…SRLH). Residues 1055–1076 (YQCDKCGKRFSHSGSYSQHMNH) form a C2H2-type 8; atypical zinc finger. Residues 1117-1214 (TPQGYSDSEE…HEEDNMEDGM (98 aa)) are disordered. A phosphoserine mark is found at Ser-1122 and Ser-1124. The segment covering 1127 to 1155 (RESMPRDGESEKEHEKEGEDGYGKLGRQD) has biased composition (basic and acidic residues). Over residues 1156–1167 (GDEEFEEEEEES) the composition is skewed to acidic residues. Basic and acidic residues-rich tracts occupy residues 1168–1179 (ENKSMDTDPETI) and 1186–1205 (GDHS…KSDH). The residue at position 1203 (Ser-1203) is a Phosphoserine.

It belongs to the delta-EF1/ZFH-1 C2H2-type zinc-finger family. As to quaternary structure, binds activated SMAD1, activated SMAD2 and activated SMAD3; binding with SMAD4 is not detected. Interacts with CBX4 and CTBP1. In terms of processing, sumoylation on Lys-391 and Lys-866 is promoted by the E3 SUMO-protein ligase CBX4, and impairs interaction with CTBP1 and transcription repression activity.

Its subcellular location is the nucleus. The protein resides in the chromosome. Its function is as follows. Transcriptional inhibitor that binds to DNA sequence 5'-CACCT-3' in different promoters. Represses transcription of E-cadherin. Represses expression of MEOX2. In Homo sapiens (Human), this protein is Zinc finger E-box-binding homeobox 2.